A 499-amino-acid chain; its full sequence is Cytochrome P450 710A2 (499 aa).

The helical transmembrane segment at 5–25 (VSIFASLAPYLVSALLLFFLI) threads the bilayer. Residue Cys-439 participates in heme binding.

This sequence belongs to the cytochrome P450 family. Requires heme as cofactor. In terms of tissue distribution, expressed in the vascular tissues of roots, shoots, stems and leaves. Expressed in root tips, carpes, siliques and seeds.

It is found in the membrane. It catalyses the reaction 5-dehydroepisterol + NADPH + O2 + H(+) = ergosta-5,7,22,24(28)-tetraen-3beta-ol + NADP(+) + 2 H2O. It participates in steroid biosynthesis; sterol biosynthesis. Functionally, required to form the C-22 double bond in the sterol side chain. Possesses in vitro C-22 desaturase activity toward 24-epi-campesterol and beta-sitosterol and produces brassicasterol and stigmasterol, respectively. No activity with campesterol. The sequence is that of Cytochrome P450 710A2 from Arabidopsis thaliana (Mouse-ear cress).